A 476-amino-acid polypeptide reads, in one-letter code: Glutamyl-tRNA(Gln) amidotransferase subunit A (476 aa).

Active-site charge relay system residues include K76 and S151. S175 functions as the Acyl-ester intermediate in the catalytic mechanism.

It belongs to the amidase family. GatA subfamily. In terms of assembly, heterotrimer of A, B and C subunits.

The enzyme catalyses L-glutamyl-tRNA(Gln) + L-glutamine + ATP + H2O = L-glutaminyl-tRNA(Gln) + L-glutamate + ADP + phosphate + H(+). Its function is as follows. Allows the formation of correctly charged Gln-tRNA(Gln) through the transamidation of misacylated Glu-tRNA(Gln) in organisms which lack glutaminyl-tRNA synthetase. The reaction takes place in the presence of glutamine and ATP through an activated gamma-phospho-Glu-tRNA(Gln). The protein is Glutamyl-tRNA(Gln) amidotransferase subunit A of Chlorobium phaeobacteroides (strain DSM 266 / SMG 266 / 2430).